The sequence spans 573 residues: Formate--tetrahydrofolate ligase 3 (573 aa).

66 to 73 contacts ATP; that stretch reads TPLGEGKT.

This sequence belongs to the formate--tetrahydrofolate ligase family.

The enzyme catalyses (6S)-5,6,7,8-tetrahydrofolate + formate + ATP = (6R)-10-formyltetrahydrofolate + ADP + phosphate. It participates in one-carbon metabolism; tetrahydrofolate interconversion. This is Formate--tetrahydrofolate ligase 3 from Rubrobacter xylanophilus (strain DSM 9941 / JCM 11954 / NBRC 16129 / PRD-1).